The chain runs to 293 residues: Diaminopimelate epimerase (293 aa).

Residues N15, Q47, and N67 each coordinate substrate. Residue C76 is the Proton donor of the active site. Substrate-binding positions include 77-78, N163, N197, and 215-216; these read GN and ER. Catalysis depends on C224, which acts as the Proton acceptor. Substrate is bound at residue 225 to 226; sequence GS.

This sequence belongs to the diaminopimelate epimerase family. Homodimer.

Its subcellular location is the cytoplasm. The catalysed reaction is (2S,6S)-2,6-diaminopimelate = meso-2,6-diaminopimelate. It functions in the pathway amino-acid biosynthesis; L-lysine biosynthesis via DAP pathway; DL-2,6-diaminopimelate from LL-2,6-diaminopimelate: step 1/1. Functionally, catalyzes the stereoinversion of LL-2,6-diaminopimelate (L,L-DAP) to meso-diaminopimelate (meso-DAP), a precursor of L-lysine and an essential component of the bacterial peptidoglycan. The polypeptide is Diaminopimelate epimerase (Chelativorans sp. (strain BNC1)).